Consider the following 586-residue polypeptide: Paxillin (586 aa).

Position 1 is an N-acetylmethionine (M1). An LD motif 1 motif is present at residues 3-15 (DLDALLADLESTT). The interval 13 to 138 (STTSHISKRP…PSPTVMSSSL (126 aa)) is disordered. Residue Y31 is modified to Phosphotyrosine; by PTK6. Pro residues predominate over residues 45–54 (VPPPVPPPPS). Residues S83 and S85 each carry the phosphoserine modification. Low complexity predominate over residues 86 to 98 (PIYSSSTKNSSAS). At Y88 the chain carries Phosphotyrosine. S106 bears the Phosphoserine mark. Position 118 is a phosphotyrosine; by PTK6 (Y118). A phosphoserine mark is found at S119, S126, and S130. The span at 121 to 137 (PNKQKSAEPSPTVMSSS) shows a compositional bias: polar residues. Residue T132 is modified to Phosphothreonine. S137, S140, and S143 each carry phosphoserine. The LD motif 2 motif lies at 144–156 (ELDRLLLELNAVQ). Phosphotyrosine is present on Y210. The segment at 220–241 (GGKAGPLMKEKPKRNGGRGLED) is disordered. Positions 245–257 (SVESLLDELENSV) match the LD motif 3 motif. A Phosphoserine modification is found at S259. The tract at residues 266–290 (VNQGEMSSPQRVTSSQQQTRISASS) is disordered. Phosphoserine; by CDK5 is present on S273. Residues S279, S287, S290, S301, S317, S327, and S335 each carry the phosphoserine modification. The interval 291 to 310 (ATRELDELMASLSDFKFMAQ) is required for binding to PARVA and ILK. An LD motif 4 motif is present at residues 294-305 (ELDELMASLSDF). A disordered region spans residues 309 to 329 (AQGKTGSSSPPGGLSKPGSQL). Low complexity predominate over residues 310 to 329 (QGKTGSSSPPGGLSKPGSQL). The LD motif 5 signature appears at 328–340 (QLDSMLGSLQSDL). 3 LIM zinc-binding domains span residues 353 to 403 (CGAC…CEKD), 412 to 462 (CYYC…CRKD), and 471 to 521 (CGGC…CEVH). Residue S528 is modified to Phosphoserine. Residues 530-580 (CSGCQKPITGRCITAMAKKFHPEHFVCAFCLKQLNKGTFKEQNDKPYCQSC) form the LIM zinc-binding 4 domain.

The protein belongs to the paxillin family. As to quaternary structure, interacts in vitro with VCL/vinculin as well as to the SH3 domain of SRC and, when tyrosine phosphorylated, to the SH2 domain of CRK. Interacts with GIT1. Interacts with NUDT16L1/SDOS. Interacts with PTK2/FAK1. Interacts with PTK2B/PYK2. Interacts with ASAP2. Interacts with unphosphorylated ITGA4. Interacts with RNF5. Interacts with PDCD10. Interacts with NEK3, the interaction is prolactin-dependent. Interacts with PTK6. Interacts with TGFB1I1. Interacts with SORBS1. Interacts with PARVB. Interacts (via LD motif 4) with PARVA/PARVIN. Interacts (via LD motif 4) with ILK. Interacts (via cytoplasmic domain) with CEACAM1; the interaction is phosphotyrosyl-dependent. Interacts with LIMA1; this complex stabilizes actin dynamics. Interacts with CD36 (via C-terminus). Interacts with TRIM15. Interacts with PAK4; PAK4 acts as a scaffold to suppport PAXI phosphorylation at Ser-301. Phosphorylated by MAPK1/ERK2. Phosphorylated on tyrosine residues during integrin-mediated cell adhesion, embryonic development, fibroblast transformation and following stimulation of cells by mitogens. Phosphorylation at Ser-273 by CDK5 reduces its interaction with PTK2/FAK1 in matrix-cell focal adhesions (MCFA) during oligodendrocytes (OLs) differentiation. Phosphorylation at Tyr-31 and Tyr-118 by PTK6 promote the activation of RAC1 via CRK/CrKII, thereby promoting migration and invasion. Phosphorylation at Ser-279 by SLK is required for PXN redistribution and cell motility. Phosphorylation at Ser-301 promotes focal adhesion disassembly during cell migration.

The protein resides in the cytoplasm. It is found in the cytoskeleton. The protein localises to the cell junction. Its subcellular location is the focal adhesion. It localises to the cell cortex. In terms of biological role, cytoskeletal protein involved in actin-membrane attachment at sites of cell adhesion to the extracellular matrix (focal adhesion). Recruits other proteins such as TRIM15 to focal adhesion. This Rattus norvegicus (Rat) protein is Paxillin.